The following is a 170-amino-acid chain: Adenine phosphoribosyltransferase (170 aa).

It belongs to the purine/pyrimidine phosphoribosyltransferase family. In terms of assembly, homodimer.

The protein localises to the cytoplasm. It catalyses the reaction AMP + diphosphate = 5-phospho-alpha-D-ribose 1-diphosphate + adenine. It participates in purine metabolism; AMP biosynthesis via salvage pathway; AMP from adenine: step 1/1. Catalyzes a salvage reaction resulting in the formation of AMP, that is energically less costly than de novo synthesis. In Mycoplasma mycoides subsp. mycoides SC (strain CCUG 32753 / NCTC 10114 / PG1), this protein is Adenine phosphoribosyltransferase.